The chain runs to 98 residues: Guanine nucleotide-binding protein subunit gamma 1 (98 aa).

Residues 19–98 (GKHRILAELA…GGEGCRCLIL (80 aa)) enclose the G protein gamma domain. The stretch at 20–50 (KHRILAELARVEQEVAFLEKELKEVENTDIV) forms a coiled coil. The tract at residues 88-94 (NGGEGCR) is regulates lipidation and cell membrane subcellular localization. C93 carries the S-palmitoyl cysteine lipid modification. At C95 the chain carries Cysteine methyl ester. Residue C95 is the site of S-farnesyl cysteine attachment. The propeptide at 96-98 (LIL) is removed in mature form.

G proteins are composed of 3 units, alpha, beta and gamma. Interacts with the beta subunit GB1. The dimer GB1-GG1 interacts with NDL1, NDL2 and NDL3. Binds to NUDT7. Mostly expressed in seedlings (especially at the hypocotyl/root junction), young cauline leaves, open flowers, and floral stems, and, to a lower extent, in roots (restricted to the stele), rosette leaves (restricted to veins), siliques, and unopened floral buds. Also present in hydathods.

It localises to the cell membrane. It is found in the golgi apparatus membrane. The protein resides in the golgi apparatus. The protein localises to the trans-Golgi network membrane. Its subcellular location is the cytoplasm. Functionally, guanine nucleotide-binding proteins (G proteins) are involved as a modulator or transducer in various transmembrane signaling systems. The beta and gamma chains are required for the GTPase activity, for replacement of GDP by GTP, and for G protein-effector interaction. Involved in the abscisic acid (ABA) and ethylene signaling pathways. Regulates acropetal transport of auxin (IAA) in roots and hypocotyls, and thus modulates root architecture (e.g. lateral root formation). The heterotrimeric G-protein controls defense responses to necrotrophic and vascular fungi probably by modulating cell wall-related genes expression; involved in resistance to fungal pathogens such as Alternaria brassicicola, Plectosphaerella cucumerina and Fusarium oxysporum. The chain is Guanine nucleotide-binding protein subunit gamma 1 (GG1) from Arabidopsis thaliana (Mouse-ear cress).